The sequence spans 468 residues: Phosphomethylpyrimidine synthase (468 aa).

Substrate contacts are provided by residues N82, M111, Y141, H177, 197 to 199 (SRG), 238 to 241 (DSLR), and E277. Position 281 (H281) interacts with Zn(2+). Residue Y304 participates in substrate binding. Residue H345 coordinates Zn(2+). Residues C425, C428, and C433 each coordinate [4Fe-4S] cluster.

The protein belongs to the ThiC family. The cofactor is [4Fe-4S] cluster.

It catalyses the reaction 5-amino-1-(5-phospho-beta-D-ribosyl)imidazole + S-adenosyl-L-methionine = 4-amino-2-methyl-5-(phosphooxymethyl)pyrimidine + CO + 5'-deoxyadenosine + formate + L-methionine + 3 H(+). It functions in the pathway cofactor biosynthesis; thiamine diphosphate biosynthesis. Its function is as follows. Catalyzes the synthesis of the hydroxymethylpyrimidine phosphate (HMP-P) moiety of thiamine from aminoimidazole ribotide (AIR) in a radical S-adenosyl-L-methionine (SAM)-dependent reaction. This Prochlorococcus marinus (strain SARG / CCMP1375 / SS120) protein is Phosphomethylpyrimidine synthase.